The following is a 339-amino-acid chain: tRNA N6-adenosine threonylcarbamoyltransferase (339 aa).

Fe cation is bound by residues H114 and H118. Substrate contacts are provided by residues 137–141 (VVSGG), D170, G183, D187, and N277. D305 is a Fe cation binding site.

The protein belongs to the KAE1 / TsaD family. Fe(2+) is required as a cofactor.

The protein resides in the cytoplasm. The enzyme catalyses L-threonylcarbamoyladenylate + adenosine(37) in tRNA = N(6)-L-threonylcarbamoyladenosine(37) in tRNA + AMP + H(+). Its function is as follows. Required for the formation of a threonylcarbamoyl group on adenosine at position 37 (t(6)A37) in tRNAs that read codons beginning with adenine. Is involved in the transfer of the threonylcarbamoyl moiety of threonylcarbamoyl-AMP (TC-AMP) to the N6 group of A37, together with TsaE and TsaB. TsaD likely plays a direct catalytic role in this reaction. The polypeptide is tRNA N6-adenosine threonylcarbamoyltransferase (Clostridium beijerinckii (strain ATCC 51743 / NCIMB 8052) (Clostridium acetobutylicum)).